The sequence spans 322 residues: ATP-dependent 6-phosphofructokinase 1 (322 aa).

Gly-11 is a binding site for ATP. 21–25 (RAVVR) serves as a coordination point for ADP. ATP is bound by residues 72 to 73 (RS) and 102 to 105 (GDGT). Residue Asp-103 coordinates Mg(2+). Substrate is bound at residue 126-128 (TID). Asp-128 serves as the catalytic Proton acceptor. An ADP-binding site is contributed by Arg-155. Substrate-binding positions include Arg-163 and 170–172 (MGR). ADP is bound by residues 186 to 188 (GAE), Arg-212, and 214 to 216 (KKS). Substrate-binding positions include Glu-223, Arg-246, and 252 to 255 (HIQR).

The protein belongs to the phosphofructokinase type A (PFKA) family. ATP-dependent PFK group I subfamily. Prokaryotic clade 'B1' sub-subfamily. In terms of assembly, homotetramer. Mg(2+) is required as a cofactor.

It localises to the cytoplasm. The catalysed reaction is beta-D-fructose 6-phosphate + ATP = beta-D-fructose 1,6-bisphosphate + ADP + H(+). It participates in carbohydrate degradation; glycolysis; D-glyceraldehyde 3-phosphate and glycerone phosphate from D-glucose: step 3/4. Allosterically activated by ADP and other diphosphonucleosides. Allosterically inhibited by phosphoenolpyruvate which induces the dissociation of the active tetramer into an inactive two-subunit forms. In terms of biological role, catalyzes the phosphorylation of D-fructose 6-phosphate to fructose 1,6-bisphosphate by ATP, the first committing step of glycolysis. In Thermus thermophilus (strain ATCC 27634 / DSM 579 / HB8), this protein is ATP-dependent 6-phosphofructokinase 1.